We begin with the raw amino-acid sequence, 20 residues long: Thylakoid lumenal 22 kDa protein (20 aa).

The protein localises to the plastid. The protein resides in the chloroplast thylakoid lumen. The sequence is that of Thylakoid lumenal 22 kDa protein from Spinacia oleracea (Spinach).